We begin with the raw amino-acid sequence, 534 residues long: Envelope glycoprotein (534 aa).

Positions 1-34 are cleaved as a signal peptide; sequence MEGPTHPKPSKDKTFSWDLMILVGVLLRLDVGMA. The Extracellular portion of the chain corresponds to 35–534; it reads NPSPHQIYNV…SLTSLSEVVL (500 aa). 2 N-linked (GlcNAc...) asparagine; by host glycosylation sites follow: Asn43 and Asn58. 2 disulfide bridges follow: Cys115-Cys132 and Cys124-Cys137. The interval 245-279 is disordered; the sequence is AMGPNLVLPDQKPPSRQSQIESRVTPHHSQGNGGT. The segment covering 258–274 has biased composition (polar residues); that stretch reads PSRQSQIESRVTPHHSQ. N-linked (GlcNAc...) asparagine; by host glycosylation is found at Asn286, Asn322, and Asn327. A CXXC motif is present at residues 332 to 335; it reads CWLC. 3 N-linked (GlcNAc...) asparagine; by host glycosylation sites follow: Asn351, Asn354, and Asn430. The segment at 468–488 is fusion peptide; it reads ISLTVALMLGGLTVGGIAAGV. A coiled-coil region spans residues 496–534; sequence LETAQFRQLQMAMHTDIQALEESISALEKSLTSLSEVVL.

As to quaternary structure, the mature envelope protein (Env) consists of a trimer of SU-TM heterodimers attached by noncovalent interactions or by a labile interchain disulfide bond. In terms of processing, specific enzymatic cleavages in vivo yield mature proteins. Envelope glycoproteins are synthesized as an inactive precursor that is N-glycosylated and processed likely by host cell furin or by a furin-like protease in the Golgi to yield the mature SU and TM proteins. The cleavage site between SU and TM requires the minimal sequence [KR]-X-[KR]-R.

The protein localises to the virion membrane. The protein resides in the host cell membrane. Its function is as follows. The surface protein (SU) attaches the virus to the host cell by binding to its receptor. This interaction triggers the refolding of the transmembrane protein (TM) and is thought to activate its fusogenic potential by unmasking its fusion peptide. Fusion occurs at the host cell plasma membrane. The transmembrane protein (TM) acts as a class I viral fusion protein. Under the current model, the protein has at least 3 conformational states: pre-fusion native state, pre-hairpin intermediate state, and post-fusion hairpin state. During viral and target cell membrane fusion, the coiled coil regions (heptad repeats) assume a trimer-of-hairpins structure, positioning the fusion peptide in close proximity to the C-terminal region of the ectodomain. The formation of this structure appears to drive apposition and subsequent fusion of viral and target cell membranes. Membranes fusion leads to delivery of the nucleocapsid into the cytoplasm. The polypeptide is Envelope glycoprotein (env) (Feline sarcoma virus (strain Snyder-Theilen)).